Reading from the N-terminus, the 183-residue chain is ATP synthase subunit delta (183 aa).

Belongs to the ATPase delta chain family. In terms of assembly, F-type ATPases have 2 components, F(1) - the catalytic core - and F(0) - the membrane proton channel. F(1) has five subunits: alpha(3), beta(3), gamma(1), delta(1), epsilon(1). F(0) has three main subunits: a(1), b(2) and c(10-14). The alpha and beta chains form an alternating ring which encloses part of the gamma chain. F(1) is attached to F(0) by a central stalk formed by the gamma and epsilon chains, while a peripheral stalk is formed by the delta and b chains.

It is found in the cell inner membrane. Its function is as follows. F(1)F(0) ATP synthase produces ATP from ADP in the presence of a proton or sodium gradient. F-type ATPases consist of two structural domains, F(1) containing the extramembraneous catalytic core and F(0) containing the membrane proton channel, linked together by a central stalk and a peripheral stalk. During catalysis, ATP synthesis in the catalytic domain of F(1) is coupled via a rotary mechanism of the central stalk subunits to proton translocation. This protein is part of the stalk that links CF(0) to CF(1). It either transmits conformational changes from CF(0) to CF(1) or is implicated in proton conduction. The polypeptide is ATP synthase subunit delta (Nitratidesulfovibrio vulgaris (strain DSM 19637 / Miyazaki F) (Desulfovibrio vulgaris)).